Consider the following 341-residue polypeptide: Anthranilate phosphoribosyltransferase (341 aa).

5-phospho-alpha-D-ribose 1-diphosphate-binding positions include Gly80, 83 to 84, Thr88, 90 to 93, 108 to 116, and Ser120; these read GD, NIST, and KHGNRAMSS. Gly80 is an anthranilate binding site. Residue Ser92 coordinates Mg(2+). Asn111 provides a ligand contact to anthranilate. Arg166 contacts anthranilate. Mg(2+) contacts are provided by Asp225 and Glu226.

Belongs to the anthranilate phosphoribosyltransferase family. As to quaternary structure, homodimer. Mg(2+) serves as cofactor.

It catalyses the reaction N-(5-phospho-beta-D-ribosyl)anthranilate + diphosphate = 5-phospho-alpha-D-ribose 1-diphosphate + anthranilate. It participates in amino-acid biosynthesis; L-tryptophan biosynthesis; L-tryptophan from chorismate: step 2/5. Functionally, catalyzes the transfer of the phosphoribosyl group of 5-phosphorylribose-1-pyrophosphate (PRPP) to anthranilate to yield N-(5'-phosphoribosyl)-anthranilate (PRA). This is Anthranilate phosphoribosyltransferase from Roseiflexus sp. (strain RS-1).